Consider the following 598-residue polypeptide: Aspartate--tRNA(Asp/Asn) ligase (598 aa).

Glutamate 175 is an L-aspartate binding site. The segment at 199–202 (QQFK) is aspartate. L-aspartate is bound by residues arginine 221 and histidine 452. 221–223 (RDE) serves as a coordination point for ATP. Glutamate 486 is an ATP binding site. Residue arginine 493 participates in L-aspartate binding. ATP is bound at residue 538–541 (GVDR).

Belongs to the class-II aminoacyl-tRNA synthetase family. Type 1 subfamily. Homodimer.

The protein resides in the cytoplasm. The enzyme catalyses tRNA(Asx) + L-aspartate + ATP = L-aspartyl-tRNA(Asx) + AMP + diphosphate. Aspartyl-tRNA synthetase with relaxed tRNA specificity since it is able to aspartylate not only its cognate tRNA(Asp) but also tRNA(Asn). Reaction proceeds in two steps: L-aspartate is first activated by ATP to form Asp-AMP and then transferred to the acceptor end of tRNA(Asp/Asn). The protein is Aspartate--tRNA(Asp/Asn) ligase of Gluconobacter oxydans (strain 621H) (Gluconobacter suboxydans).